Consider the following 289-residue polypeptide: Probable endonuclease 4 (289 aa).

Positions 76, 116, 152, 186, 189, 220, 233, 235, and 265 each coordinate Zn(2+).

The protein belongs to the AP endonuclease 2 family. Zn(2+) serves as cofactor.

The catalysed reaction is Endonucleolytic cleavage to 5'-phosphooligonucleotide end-products.. Its function is as follows. Endonuclease IV plays a role in DNA repair. It cleaves phosphodiester bonds at apurinic or apyrimidinic (AP) sites, generating a 3'-hydroxyl group and a 5'-terminal sugar phosphate. The protein is Probable endonuclease 4 of Malacoplasma penetrans (strain HF-2) (Mycoplasma penetrans).